Here is an 89-residue protein sequence, read N- to C-terminus: Large ribosomal subunit protein bL27 (89 aa).

The interval 1–20 is disordered; that stretch reads MAHKKAGGSSRNGRDSAGRR.

This sequence belongs to the bacterial ribosomal protein bL27 family.

The polypeptide is Large ribosomal subunit protein bL27 (Rhizorhabdus wittichii (strain DSM 6014 / CCUG 31198 / JCM 15750 / NBRC 105917 / EY 4224 / RW1) (Sphingomonas wittichii)).